Consider the following 289-residue polypeptide: Ribosomal protein L11 methyltransferase (289 aa).

S-adenosyl-L-methionine is bound by residues Thr142, Gly163, Asp185, and Asn226.

Belongs to the methyltransferase superfamily. PrmA family.

It is found in the cytoplasm. The catalysed reaction is L-lysyl-[protein] + 3 S-adenosyl-L-methionine = N(6),N(6),N(6)-trimethyl-L-lysyl-[protein] + 3 S-adenosyl-L-homocysteine + 3 H(+). Functionally, methylates ribosomal protein L11. In Legionella pneumophila (strain Paris), this protein is Ribosomal protein L11 methyltransferase.